The following is a 126-amino-acid chain: Large ribosomal subunit protein eL18 (126 aa).

This sequence belongs to the eukaryotic ribosomal protein eL18 family.

The protein is Large ribosomal subunit protein eL18 of Methanosarcina mazei (strain ATCC BAA-159 / DSM 3647 / Goe1 / Go1 / JCM 11833 / OCM 88) (Methanosarcina frisia).